We begin with the raw amino-acid sequence, 738 residues long: Multifunctional procollagen lysine hydroxylase and glycosyltransferase LH3 (738 aa).

A signal peptide spans 1-24 (MTSSGPGPRFLLLLPLLLPPAASA). The required for glycosyltransferase activity stretch occupies residues 25–290 (SDRPRGRDPV…FCNQDRRTLP (266 aa)). 44–46 (VAT) provides a ligand contact to UDP. An N-linked (GlcNAc...) asparagine glycan is attached at Asn-63. Asp-112, Asp-115, and His-253 together coordinate Mn(2+). 112–114 (DSY) lines the UDP pocket. Residue 256-259 (GPTK) participates in UDP binding. Intrachain disulfides connect Cys-279–Cys-282 and Cys-379–Cys-385. The segment at 295 to 520 (PPRVFLAVFV…EFGRLLATSR (226 aa)) is accessory region. An N-linked (GlcNAc...) asparagine glycan is attached at Asn-548. Cys-563 and Cys-698 form a disulfide bridge. 2-oxoglutarate is bound by residues Arg-599 and Tyr-656. A Fe2OG dioxygenase domain is found at 647–738 (RAVMNFVVRY…RYIMVSFVDP (92 aa)). Residues His-667 and Asp-669 each contribute to the Fe cation site. The important for dimerization stretch occupies residues 672 to 715 (TFTLNVALNHKGLDYEGGGCRFLRYDCVISSPRKGWALLHPGRL). Asn-676 contacts 2-oxoglutarate. His-719 lines the Fe cation pocket. 2-oxoglutarate is bound at residue Arg-729.

In terms of assembly, homodimer. Fe(2+) is required as a cofactor. It depends on L-ascorbate as a cofactor. Mn(2+) serves as cofactor.

The protein resides in the rough endoplasmic reticulum. It is found in the endoplasmic reticulum lumen. Its subcellular location is the endoplasmic reticulum membrane. The protein localises to the secreted. It localises to the extracellular space. It carries out the reaction L-lysyl-[collagen] + 2-oxoglutarate + O2 = (5R)-5-hydroxy-L-lysyl-[collagen] + succinate + CO2. It catalyses the reaction (5R)-5-hydroxy-L-lysyl-[collagen] + UDP-alpha-D-galactose = (5R)-5-O-(beta-D-galactosyl)-5-hydroxy-L-lysyl-[collagen] + UDP + H(+). The catalysed reaction is (5R)-5-O-(beta-D-galactosyl)-5-hydroxy-L-lysyl-[collagen] + UDP-alpha-D-glucose = (5R)-5-O-[alpha-D-glucosyl-(1-&gt;2)-beta-D-galactosyl]-5-hydroxy-L-lysyl-[collagen] + UDP + H(+). In terms of biological role, multifunctional enzyme that catalyzes a series of post-translational modifications on Lys residues in procollagen. Plays a redundant role in catalyzing the formation of hydroxylysine residues in -Xaa-Lys-Gly- sequences in collagens. Plays a redundant role in catalyzing the transfer of galactose onto hydroxylysine groups, giving rise to galactosyl 5-hydroxylysine. Has an essential role by catalyzing the subsequent transfer of glucose moieties, giving rise to 1,2-glucosylgalactosyl-5-hydroxylysine residues. Catalyzes hydroxylation and glycosylation of Lys residues in the MBL1 collagen-like domain, giving rise to hydroxylysine and 1,2-glucosylgalactosyl-5-hydroxylysine residues. Catalyzes hydroxylation and glycosylation of Lys residues in the ADIPOQ collagen-like domain, giving rise to hydroxylysine and 1,2-glucosylgalactosyl-5-hydroxylysine residues. Essential for normal biosynthesis and secretion of type IV collagens. Essential for normal formation of basement membranes. The protein is Multifunctional procollagen lysine hydroxylase and glycosyltransferase LH3 (PLOD3) of Pongo abelii (Sumatran orangutan).